Reading from the N-terminus, the 491-residue chain is Cobyric acid synthase (491 aa).

The GATase cobBQ-type domain maps to 250–439; sequence ELNIIVIRLP…LHGIFDNGSW (190 aa). The active-site Nucleophile is Cys-331. Residue His-431 is part of the active site.

This sequence belongs to the CobB/CobQ family. CobQ subfamily.

It participates in cofactor biosynthesis; adenosylcobalamin biosynthesis. Its function is as follows. Catalyzes amidations at positions B, D, E, and G on adenosylcobyrinic A,C-diamide. NH(2) groups are provided by glutamine, and one molecule of ATP is hydrogenolyzed for each amidation. The sequence is that of Cobyric acid synthase from Microcystis aeruginosa (strain NIES-843 / IAM M-2473).